Reading from the N-terminus, the 142-residue chain is Large ribosomal subunit protein uL11 (142 aa).

It belongs to the universal ribosomal protein uL11 family. As to quaternary structure, part of the ribosomal stalk of the 50S ribosomal subunit. Interacts with L10 and the large rRNA to form the base of the stalk. L10 forms an elongated spine to which L12 dimers bind in a sequential fashion forming a multimeric L10(L12)X complex. One or more lysine residues are methylated.

In terms of biological role, forms part of the ribosomal stalk which helps the ribosome interact with GTP-bound translation factors. The polypeptide is Large ribosomal subunit protein uL11 (Rhodopseudomonas palustris (strain BisA53)).